Here is a 743-residue protein sequence, read N- to C-terminus: Isocitrate dehydrogenase [NADP] 2 (743 aa).

Residues asparagine 87 and serine 89 each coordinate NADP(+). D-threo-isocitrate-binding residues include serine 134, asparagine 137, arginine 141, arginine 147, and lysine 257. Residue asparagine 137 participates in NADP(+) binding. Aspartate 352 contacts Mg(2+). D-threo-isocitrate contacts are provided by tyrosine 422 and arginine 549. Mg(2+) is bound by residues aspartate 550 and aspartate 554. NADP(+) is bound by residues serine 587, histidine 591, arginine 602, aspartate 604, and arginine 651.

The protein belongs to the monomeric-type IDH family. Monomer. Mg(2+) is required as a cofactor. Requires Mn(2+) as cofactor.

The enzyme catalyses D-threo-isocitrate + NADP(+) = 2-oxoglutarate + CO2 + NADPH. Functionally, catalyzes the oxidative decarboxylation of isocitrate to 2-oxoglutarate and carbon dioxide with the concomitant reduction of NADP(+). This chain is Isocitrate dehydrogenase [NADP] 2 (icd2), found in Colwellia maris.